The following is a 488-amino-acid chain: Glutamyl-tRNA(Gln) amidotransferase subunit A (488 aa).

Residues lysine 76 and serine 151 each act as charge relay system in the active site. Serine 175 serves as the catalytic Acyl-ester intermediate.

This sequence belongs to the amidase family. GatA subfamily. In terms of assembly, heterotrimer of A, B and C subunits.

The enzyme catalyses L-glutamyl-tRNA(Gln) + L-glutamine + ATP + H2O = L-glutaminyl-tRNA(Gln) + L-glutamate + ADP + phosphate + H(+). Its function is as follows. Allows the formation of correctly charged Gln-tRNA(Gln) through the transamidation of misacylated Glu-tRNA(Gln) in organisms which lack glutaminyl-tRNA synthetase. The reaction takes place in the presence of glutamine and ATP through an activated gamma-phospho-Glu-tRNA(Gln). The chain is Glutamyl-tRNA(Gln) amidotransferase subunit A from Symbiobacterium thermophilum (strain DSM 24528 / JCM 14929 / IAM 14863 / T).